The sequence spans 124 residues: Seripauperin-23 (124 aa).

Residues 1-20 (MVKLTSIVAGVAAIAAGVAA) form the signal peptide.

This sequence belongs to the SRP1/TIP1 family. Seripauperin subfamily. In terms of processing, O-glycosylated.

It is found in the secreted. The protein localises to the cell wall. In terms of biological role, component of the cell wall. In Saccharomyces cerevisiae (strain ATCC 204508 / S288c) (Baker's yeast), this protein is Seripauperin-23 (PAU23).